The chain runs to 261 residues: Bcl-2-binding component 3, isoforms 3/4 (261 aa).

Residues 27 to 261 are disordered; it reads QICGPRERHG…ASAGDFLCTM (235 aa). Positions 40–50 are enriched in low complexity; sequence PGGQLPGARRG. Over residues 53–63 the composition is skewed to pro residues; sequence PRRPAPLPARP. Residues 64-73 show a composition bias toward low complexity; sequence PGALGSVLRP. Composition is skewed to basic residues over residues 74-87 and 95-106; these read LRARPGCRPRRPHP and RPHRPTRRHRRP. Residues 124–146 are compositionally biased toward low complexity; it reads PGRSSALALAGGAAPGVARAQRP. The segment covering 147–171 has biased composition (gly residues); the sequence is GGSGGRSHPGGPGSPRGGGTVGPGD. Low complexity predominate over residues 172–197; it reads RGPAAADGGRPQRTVRAAETRGAAAA.

As to quaternary structure, does not interact with BCL2.

Its function is as follows. Does not affect cell growth. The protein is Bcl-2-binding component 3, isoforms 3/4 (BBC3) of Homo sapiens (Human).